A 250-amino-acid chain; its full sequence is Pyrroloquinoline-quinone synthase (250 aa).

The protein belongs to the PqqC family.

It carries out the reaction 6-(2-amino-2-carboxyethyl)-7,8-dioxo-1,2,3,4,7,8-hexahydroquinoline-2,4-dicarboxylate + 3 O2 = pyrroloquinoline quinone + 2 H2O2 + 2 H2O + H(+). The protein operates within cofactor biosynthesis; pyrroloquinoline quinone biosynthesis. In terms of biological role, ring cyclization and eight-electron oxidation of 3a-(2-amino-2-carboxyethyl)-4,5-dioxo-4,5,6,7,8,9-hexahydroquinoline-7,9-dicarboxylic-acid to PQQ. In Pseudomonas aeruginosa (strain LESB58), this protein is Pyrroloquinoline-quinone synthase.